An 800-amino-acid chain; its full sequence is U4/U6.U5 tri-snRNP-associated protein 1 (800 aa).

Positions 1 to 120 (MGSSKKHRGE…SSGDASSLSI (120 aa)) are disordered. A compositionally biased stretch (basic residues) spans 32 to 42 (HREHKKHKHRS). Positions 58-101 (ERGGERGSGRRGAEAEARSSTHGRERSQAEPSERRVKREKRDDG) are enriched in basic and acidic residues. The segment covering 104-119 (AAASSKTSSGDASSLS) has biased composition (low complexity). Residues K125 and K133 each participate in a glycyl lysine isopeptide (Lys-Gly) (interchain with G-Cter in SUMO2) cross-link. K141 is covalently cross-linked (Glycyl lysine isopeptide (Lys-Gly) (interchain with G-Cter in SUMO1); alternate). K141 participates in a covalent cross-link: Glycyl lysine isopeptide (Lys-Gly) (interchain with G-Cter in SUMO2); alternate. Residues K147 and K188 each participate in a glycyl lysine isopeptide (Lys-Gly) (interchain with G-Cter in SUMO2) cross-link. The stretch at 157 to 231 (NPMALRQREE…KLLEEMDQEF (75 aa)) forms a coiled coil. The residue at position 189 (T189) is a Phosphothreonine. K277 is covalently cross-linked (Glycyl lysine isopeptide (Lys-Gly) (interchain with G-Cter in SUMO2)). Residues 311–330 (PDYLPYAEDESVDDLAQQKP) are disordered. S321 is modified (phosphoserine). Glycyl lysine isopeptide (Lys-Gly) (interchain with G-Cter in SUMO2) cross-links involve residues K329 and K336. Position 348 is a phosphoserine (S348). T392 is modified (phosphothreonine). Residues K400 and K414 each participate in a glycyl lysine isopeptide (Lys-Gly) (interchain with G-Cter in SUMO2) cross-link. The interval 419-497 (RADDLLPLGD…QVLEEDEAEL (79 aa)) is disordered. T430 bears the Phosphothreonine mark. Phosphoserine is present on residues S448, S474, S486, and S521. Residues 490–533 (LEEDEAELELQKQLEKGRRLRQLQQLQQLRDSGEKVVEIVKKLE) adopt a coiled-coil conformation. Residue K548 forms a Glycyl lysine isopeptide (Lys-Gly) (interchain with G-Cter in SUMO2) linkage. A disordered region spans residues 571–604 (LAGNREEQEELMDFERDEERSANGGSESDGEENI). Phosphoserine is present on residues S591, S596, S598, and S621. Glycyl lysine isopeptide (Lys-Gly) (interchain with G-Cter in SUMO2) cross-links involve residues K648, K657, and K684. Residue T695 is modified to Phosphothreonine. Glycyl lysine isopeptide (Lys-Gly) (interchain with G-Cter in SUMO2) cross-links involve residues K699, K709, K723, K749, and K758. S761 bears the Phosphoserine mark. Position 764 is a phosphothreonine (T764). Residues K775 and K780 each participate in a glycyl lysine isopeptide (Lys-Gly) (interchain with G-Cter in SUMO2) cross-link. A Phosphoserine modification is found at S789. A Glycyl lysine isopeptide (Lys-Gly) (interchain with G-Cter in SUMO2) cross-link involves residue K791.

This sequence belongs to the SNU66/SART1 family. Identified in the spliceosome C complex. Component of the U4/U6-U5 tri-snRNP complex composed of the U4, U6 and U5 snRNAs and at least PRPF3, PRPF4, PRPF6, PRPF8, PRPF31, SNRNP200, TXNL4A, SNRNP40, DDX23, CD2BP2, PPIH, SNU13, EFTUD2, SART1 and USP39. Interacts with UBL5. Interacts with IVNS1ABP (via Kelch repeats). Sumoylated with SUMO2. As to expression, ubiquitously expressed.

The protein localises to the nucleus. Functionally, plays a role in mRNA splicing as a component of the U4/U6-U5 tri-snRNP, one of the building blocks of the spliceosome. May also bind to DNA. In Homo sapiens (Human), this protein is U4/U6.U5 tri-snRNP-associated protein 1 (SART1).